Here is a 948-residue protein sequence, read N- to C-terminus: ELKS/Rab6-interacting/CAST family member 1 (948 aa).

Residues 1 to 54 (MYGSARSVGKVEPSSQSPGRSPRLPRSPRLGHRRTNSTGGSSGNSVGGGSGKTL) are disordered. N6-acetyllysine is present on K10. Over residues 13–28 (PSSQSPGRSPRLPRSP) the composition is skewed to low complexity. Residues S17, S21, and S37 each carry the phosphoserine modification. T38 carries the post-translational modification Phosphothreonine. The span at 40–51 (GSSGNSVGGGSG) shows a compositional bias: gly residues. Phosphoserine occurs at positions 55, 75, 94, 796, and 937. A coiled-coil region spans residues 144 to 920 (RQARDNTIMD…RMKLMADNYE (777 aa)). The span at 773 to 796 (KHKEQVEKKKSAQMLEEARRREDS) shows a compositional bias: basic and acidic residues. Disordered stretches follow at residues 773 to 801 (KHKE…SDSS) and 903 to 948 (QLKQ…GIWA). Positions 939-948 (DQDEEEGIWA) are enriched in acidic residues.

In terms of assembly, interacts with the GTB-bound forms of RAB6A isoform 1 and isoform 2 and with RAB6B. The interaction was strongest with RAB6B, followed by RAB6A isoform 2 and weakest with RAB6A isoform 1. Part of a complex with CHUK, IKBKB and IKBKG. Interacts with CHUK, IKBKB and IKBKG. The interaction with IKBKG is independent of CHUK and IKBKB. Interacts with NFKBIA. Isoform 1 interacts through its C-terminus with the PDZ domains of RIMS1 and RIMS2. Interacts with ERC2/CAST1. Interacts with SDCCAG8. Part of a cortical microtubule stabilization complex (CMSC) composed of KANK1, PPFIA1, PPFIBP1, ERC1/ELKS, PHLDB2/LL5beta, CLASPs, KIF21A and possibly additional interactors; within CMSCs KANK1 and PHLDB2/LL5beta appear to be the core components for targeting of microtubule-binding proteins KIF21A and CLASPs, whereas PPFIA1, PPFIBP1 and ERC1/ELKS serve as scaffolds for protein clustering. As to expression, isoform 1 is specifically expressed in brain. A further probable isoform is widely expressed outside of brain It is referred to as ERC1a by PubMed:12391317 and characterized by a C-terminus identical to that of isoforms 1 in human and mouse.

It is found in the cytoplasm. The protein resides in the cytoskeleton. Its subcellular location is the microtubule organizing center. It localises to the centrosome. The protein localises to the membrane. It is found in the golgi apparatus membrane. The protein resides in the presynaptic active zone. Its subcellular location is the cell projection. It localises to the podosome. In terms of biological role, regulatory subunit of the IKK complex. Probably recruits IkappaBalpha/NFKBIA to the complex. May be involved in the organization of the cytomatrix at the nerve terminals active zone (CAZ) which regulates neurotransmitter release. May be involved in vesicle trafficking at the CAZ. May be involved in Rab-6 regulated endosomes to Golgi transport. The polypeptide is ELKS/Rab6-interacting/CAST family member 1 (Erc1) (Rattus norvegicus (Rat)).